The chain runs to 567 residues: Proline--tRNA ligase (567 aa).

The protein belongs to the class-II aminoacyl-tRNA synthetase family. ProS type 1 subfamily. As to quaternary structure, homodimer.

Its subcellular location is the cytoplasm. It carries out the reaction tRNA(Pro) + L-proline + ATP = L-prolyl-tRNA(Pro) + AMP + diphosphate. Functionally, catalyzes the attachment of proline to tRNA(Pro) in a two-step reaction: proline is first activated by ATP to form Pro-AMP and then transferred to the acceptor end of tRNA(Pro). As ProRS can inadvertently accommodate and process non-cognate amino acids such as alanine and cysteine, to avoid such errors it has two additional distinct editing activities against alanine. One activity is designated as 'pretransfer' editing and involves the tRNA(Pro)-independent hydrolysis of activated Ala-AMP. The other activity is designated 'posttransfer' editing and involves deacylation of mischarged Ala-tRNA(Pro). The misacylated Cys-tRNA(Pro) is not edited by ProRS. The polypeptide is Proline--tRNA ligase (Streptomyces coelicolor (strain ATCC BAA-471 / A3(2) / M145)).